Consider the following 475-residue polypeptide: Aspartyl/glutamyl-tRNA(Asn/Gln) amidotransferase subunit B (475 aa).

This sequence belongs to the GatB/GatE family. GatB subfamily. Heterotrimer of A, B and C subunits.

The catalysed reaction is L-glutamyl-tRNA(Gln) + L-glutamine + ATP + H2O = L-glutaminyl-tRNA(Gln) + L-glutamate + ADP + phosphate + H(+). It catalyses the reaction L-aspartyl-tRNA(Asn) + L-glutamine + ATP + H2O = L-asparaginyl-tRNA(Asn) + L-glutamate + ADP + phosphate + 2 H(+). In terms of biological role, allows the formation of correctly charged Asn-tRNA(Asn) or Gln-tRNA(Gln) through the transamidation of misacylated Asp-tRNA(Asn) or Glu-tRNA(Gln) in organisms which lack either or both of asparaginyl-tRNA or glutaminyl-tRNA synthetases. The reaction takes place in the presence of glutamine and ATP through an activated phospho-Asp-tRNA(Asn) or phospho-Glu-tRNA(Gln). This Staphylococcus haemolyticus (strain JCSC1435) protein is Aspartyl/glutamyl-tRNA(Asn/Gln) amidotransferase subunit B.